We begin with the raw amino-acid sequence, 241 residues long: Ribonuclease PH (241 aa).

Phosphate contacts are provided by residues R89 and 127 to 129; that span reads GTR.

It belongs to the RNase PH family. As to quaternary structure, homohexameric ring arranged as a trimer of dimers.

The enzyme catalyses tRNA(n+1) + phosphate = tRNA(n) + a ribonucleoside 5'-diphosphate. Its function is as follows. Phosphorolytic 3'-5' exoribonuclease that plays an important role in tRNA 3'-end maturation. Removes nucleotide residues following the 3'-CCA terminus of tRNAs; can also add nucleotides to the ends of RNA molecules by using nucleoside diphosphates as substrates, but this may not be physiologically important. Probably plays a role in initiation of 16S rRNA degradation (leading to ribosome degradation) during starvation. The protein is Ribonuclease PH of Xanthomonas euvesicatoria pv. vesicatoria (strain 85-10) (Xanthomonas campestris pv. vesicatoria).